A 122-amino-acid chain; its full sequence is Large ribosomal subunit protein uL14 (122 aa).

This sequence belongs to the universal ribosomal protein uL14 family. In terms of assembly, part of the 50S ribosomal subunit. Forms a cluster with proteins L3 and L19. In the 70S ribosome, L14 and L19 interact and together make contacts with the 16S rRNA in bridges B5 and B8.

In terms of biological role, binds to 23S rRNA. Forms part of two intersubunit bridges in the 70S ribosome. The sequence is that of Large ribosomal subunit protein uL14 from Bifidobacterium animalis subsp. lactis (strain AD011).